The sequence spans 103 residues: MYAVFQSGGKQHRVSEGHVVRLEKLELATGSTVEFDSVLMIVNGEDIKIGTPVVTGAKVVAEVVSQGRGEKVKIVKFRRRKHSRKQQGHRQWFTEVKITGIQA.

This sequence belongs to the bacterial ribosomal protein bL21 family. As to quaternary structure, part of the 50S ribosomal subunit. Contacts protein L20.

Its function is as follows. This protein binds to 23S rRNA in the presence of protein L20. This chain is Large ribosomal subunit protein bL21, found in Histophilus somni (strain 129Pt) (Haemophilus somnus).